The primary structure comprises 245 residues: Transcriptional regulatory protein YpdB (245 aa).

The 115-residue stretch at 2 to 116 (KVIIVEDEFL…RITGMLQKLE (115 aa)) folds into the Response regulatory domain. The residue at position 53 (Asp53) is a 4-aspartylphosphate. Residues 140–245 (INLVKDERII…VKEFRQLMHL (106 aa)) form the HTH LytTR-type domain.

In terms of processing, phosphorylated by YpdA.

The protein resides in the cytoplasm. Functionally, member of the two-component regulatory system YpdA/YpdB. YpdB regulates expression of yhjX by binding to its promoter region. The sequence is that of Transcriptional regulatory protein YpdB (ypdB) from Escherichia coli O6:H1 (strain CFT073 / ATCC 700928 / UPEC).